We begin with the raw amino-acid sequence, 118 residues long: Co-chaperonin GroES (118 aa).

Belongs to the GroES chaperonin family. As to quaternary structure, heptamer of 7 subunits arranged in a ring. Interacts with the chaperonin GroEL.

It localises to the cytoplasm. Functionally, together with the chaperonin GroEL, plays an essential role in assisting protein folding. The GroEL-GroES system forms a nano-cage that allows encapsulation of the non-native substrate proteins and provides a physical environment optimized to promote and accelerate protein folding. GroES binds to the apical surface of the GroEL ring, thereby capping the opening of the GroEL channel. The polypeptide is Co-chaperonin GroES (Helicobacter pylori (strain HPAG1)).